The following is a 193-amino-acid chain: Superoxide dismutase [Fe] (193 aa).

The Fe cation site is built by histidine 27, histidine 74, aspartate 157, and histidine 161.

The protein belongs to the iron/manganese superoxide dismutase family. Monomer. It depends on Fe cation as a cofactor.

It carries out the reaction 2 superoxide + 2 H(+) = H2O2 + O2. In terms of biological role, destroys superoxide anion radicals which are normally produced within the cells and which are toxic to biological systems. Involved in the metabolism of 4-aminophenol. May have an indirect role in hydroxyquinol metabolism by scavenging and detoxifying reactive species that promote its auto-oxidation. The chain is Superoxide dismutase [Fe] from Burkholderia sp.